Consider the following 759-residue polypeptide: Mitogen-activated protein kinase kinase kinase 1a (759 aa).

Basic and acidic residues-rich tracts occupy residues 1 to 17 (MIEERGSSRGSREDRGS), 25 to 36 (SFEDKGSSHDWK), and 52 to 64 (AKKDRNYDAKVDS). Disordered stretches follow at residues 1–90 (MIEE…NLSK), 122–160 (LGIEASDWESRRKSAVYSRPTSPPRVSHDTGQSSYSHDF), 165–184 (SRVDSSLESPPLSPRGLAPM), and 195–239 (RKHR…PDPL). Residues 72–85 (VHSTSSPRLSPASS) are compositionally biased toward low complexity. In terms of domain architecture, Protein kinase spans 426 to 679 (WAKGEFLGSG…CDMLLAHPFI (254 aa)). ATP-binding positions include 432–440 (LGSGTFGSV) and K454. D549 serves as the catalytic Proton acceptor.

This sequence belongs to the protein kinase superfamily. STE Ser/Thr protein kinase family. MAP kinase kinase kinase subfamily.

It is found in the cell membrane. It carries out the reaction L-seryl-[protein] + ATP = O-phospho-L-seryl-[protein] + ADP + H(+). The catalysed reaction is L-threonyl-[protein] + ATP = O-phospho-L-threonyl-[protein] + ADP + H(+). Functionally, the CERK1, MEKK1a/b, MKK1a/b/c and MPK4a/b proteins are involved in pathogen defense. The pathway induces rapid growth inhibition, cell wall depositions and accumulation of defense-related transcripts. This protein is required for responses to chitin and acts redundantly with MEKK1b. The sequence is that of Mitogen-activated protein kinase kinase kinase 1a from Physcomitrium patens (Spreading-leaved earth moss).